Here is a 235-residue protein sequence, read N- to C-terminus: CMP-N,N'-diacetyllegionaminic acid synthase (235 aa).

The protein belongs to the CMP-NeuNAc synthase family.

The enzyme catalyses N,N-diacetyllegionaminate + CTP = CMP-N,N-diacetyllegionaminate + diphosphate. Its function is as follows. Involved in biosynthesis of legionaminic acid (5,7-diamino-3,5,7,9-tetradeoxy-D-glycero-D-galacto-non-2-ulosonic acid)(Leg), a sialic acid-like derivative that is incorporated into flagellin via O-linkage to Ser/Thr. Catalyzes the conversion of N,N'-diacetyllegionaminic acid (Leg5Ac7Ac) and CTP into CMP-N,N'-diacetyllegionaminic acid (CMP-Leg5Ac7Ac). This is CMP-N,N'-diacetyllegionaminic acid synthase (legF) from Campylobacter jejuni subsp. jejuni serotype O:2 (strain ATCC 700819 / NCTC 11168).